The following is a 263-amino-acid chain: Hydroxyacylglutathione hydrolase (263 aa).

Zn(2+)-binding residues include H55, H57, D59, H60, H117, D134, and H172.

The protein belongs to the metallo-beta-lactamase superfamily. Glyoxalase II family. As to quaternary structure, monomer. The cofactor is Zn(2+).

The catalysed reaction is an S-(2-hydroxyacyl)glutathione + H2O = a 2-hydroxy carboxylate + glutathione + H(+). It functions in the pathway secondary metabolite metabolism; methylglyoxal degradation; (R)-lactate from methylglyoxal: step 2/2. In terms of biological role, thiolesterase that catalyzes the hydrolysis of S-D-lactoyl-glutathione to form glutathione and D-lactic acid. This is Hydroxyacylglutathione hydrolase from Shewanella baltica (strain OS223).